A 355-amino-acid polypeptide reads, in one-letter code: Holliday junction branch migration complex subunit RuvB (355 aa).

The tract at residues 1-26 (MSIQTDDFASSSPAARRVVSTAPASP) is disordered. Residues 5-196 (TDDFASSSPA…FGIVARLEFY (192 aa)) are large ATPase domain (RuvB-L). Residues 9 to 22 (ASSSPAARRVVSTA) are compositionally biased toward low complexity. ATP-binding positions include leucine 35, arginine 36, glycine 77, lysine 80, threonine 81, threonine 82, 143–145 (EDY), arginine 186, tyrosine 196, and arginine 233. Threonine 81 serves as a coordination point for Mg(2+). The small ATPAse domain (RuvB-S) stretch occupies residues 197–267 (SVEELARIVT…IADKALAMLD (71 aa)). A head domain (RuvB-H) region spans residues 270–355 (PQGFDVMDRK…TTSGSELFDA (86 aa)). DNA contacts are provided by arginine 325 and arginine 330.

The protein belongs to the RuvB family. Homohexamer. Forms an RuvA(8)-RuvB(12)-Holliday junction (HJ) complex. HJ DNA is sandwiched between 2 RuvA tetramers; dsDNA enters through RuvA and exits via RuvB. An RuvB hexamer assembles on each DNA strand where it exits the tetramer. Each RuvB hexamer is contacted by two RuvA subunits (via domain III) on 2 adjacent RuvB subunits; this complex drives branch migration. In the full resolvosome a probable DNA-RuvA(4)-RuvB(12)-RuvC(2) complex forms which resolves the HJ.

The protein resides in the cytoplasm. It carries out the reaction ATP + H2O = ADP + phosphate + H(+). Functionally, the RuvA-RuvB-RuvC complex processes Holliday junction (HJ) DNA during genetic recombination and DNA repair, while the RuvA-RuvB complex plays an important role in the rescue of blocked DNA replication forks via replication fork reversal (RFR). RuvA specifically binds to HJ cruciform DNA, conferring on it an open structure. The RuvB hexamer acts as an ATP-dependent pump, pulling dsDNA into and through the RuvAB complex. RuvB forms 2 homohexamers on either side of HJ DNA bound by 1 or 2 RuvA tetramers; 4 subunits per hexamer contact DNA at a time. Coordinated motions by a converter formed by DNA-disengaged RuvB subunits stimulates ATP hydrolysis and nucleotide exchange. Immobilization of the converter enables RuvB to convert the ATP-contained energy into a lever motion, pulling 2 nucleotides of DNA out of the RuvA tetramer per ATP hydrolyzed, thus driving DNA branch migration. The RuvB motors rotate together with the DNA substrate, which together with the progressing nucleotide cycle form the mechanistic basis for DNA recombination by continuous HJ branch migration. Branch migration allows RuvC to scan DNA until it finds its consensus sequence, where it cleaves and resolves cruciform DNA. The chain is Holliday junction branch migration complex subunit RuvB from Methylibium petroleiphilum (strain ATCC BAA-1232 / LMG 22953 / PM1).